The following is a 107-amino-acid chain: Ig kappa chain V-VI region NQ5-78.2.6 (107 aa).

The interval 1–23 (QILLTQSPAIMSASPGQKVTMTC) is framework-1. The cysteines at positions 23 and 87 are disulfide-linked. The complementarity-determining-1 stretch occupies residues 24-33 (SASSSVSYMH). Residues 34-48 (WYQQKSGTSPKRWIY) are framework-2. Residues 49 to 55 (DTSKLAS) are complementarity-determining-2. The interval 56-87 (GVPARFXGSGSATSYSLTITSMQAEDAATYYC) is framework-3. The segment at 88-96 (QQWSSNPLT) is complementarity-determining-3. The interval 97–106 (FGSGTKLEXK) is framework-4.

Functionally, anti-2-phenyl oxazolone (PHOX) Antibody. This Mus musculus (Mouse) protein is Ig kappa chain V-VI region NQ5-78.2.6.